A 125-amino-acid chain; its full sequence is MRLAGVNLPLNKHAVIALTYVYGIGNTSAKNILAKAGVAPDKKISELSDEEAHAIREIIGNEYTVEGEARAEQQLSIKRLMDIGCYRGLRHRRSLPVRGQRTRTNARTRKGKRKTVAGKKKAGKK.

The segment at arginine 93–lysine 125 is disordered.

This sequence belongs to the universal ribosomal protein uS13 family. In terms of assembly, part of the 30S ribosomal subunit. Forms a loose heterodimer with protein S19. Forms two bridges to the 50S subunit in the 70S ribosome.

Its function is as follows. Located at the top of the head of the 30S subunit, it contacts several helices of the 16S rRNA. In the 70S ribosome it contacts the 23S rRNA (bridge B1a) and protein L5 of the 50S subunit (bridge B1b), connecting the 2 subunits; these bridges are implicated in subunit movement. Contacts the tRNAs in the A and P-sites. This Chlorobaculum tepidum (strain ATCC 49652 / DSM 12025 / NBRC 103806 / TLS) (Chlorobium tepidum) protein is Small ribosomal subunit protein uS13.